The primary structure comprises 80 residues: uncharacterized protein (80 aa).

Residues 1–20 (MVAADHRALGSNKSYPASQT) form the signal peptide. Residues 1-21 (MVAADHRALGSNKSYPASQTA) are disordered. The span at 11 to 21 (SNKSYPASQTA) shows a compositional bias: polar residues.

This is an uncharacterized protein from Mycobacterium tuberculosis (strain CDC 1551 / Oshkosh).